The sequence spans 120 residues: Aspartate 1-decarboxylase (120 aa).

The active-site Schiff-base intermediate with substrate; via pyruvic acid is S25. Position 25 is a pyruvic acid (Ser) (S25). Residue T57 participates in substrate binding. Residue Y58 is the Proton donor of the active site. 73–75 serves as a coordination point for substrate; it reads GAA.

It belongs to the PanD family. In terms of assembly, heterooctamer of four alpha and four beta subunits. The cofactor is pyruvate. Is synthesized initially as an inactive proenzyme, which is activated by self-cleavage at a specific serine bond to produce a beta-subunit with a hydroxyl group at its C-terminus and an alpha-subunit with a pyruvoyl group at its N-terminus.

The protein resides in the cytoplasm. It catalyses the reaction L-aspartate + H(+) = beta-alanine + CO2. The protein operates within cofactor biosynthesis; (R)-pantothenate biosynthesis; beta-alanine from L-aspartate: step 1/1. Catalyzes the pyruvoyl-dependent decarboxylation of aspartate to produce beta-alanine. This is Aspartate 1-decarboxylase from Deinococcus deserti (strain DSM 17065 / CIP 109153 / LMG 22923 / VCD115).